The primary structure comprises 1002 residues: ATP-dependent DNA helicase MPH1 (1002 aa).

In terms of domain architecture, Helicase ATP-binding spans 108–275 (IVRCALFENV…EVVNNLHISK (168 aa)). Position 121–128 (121–128 (IPTGTGKT)) interacts with ATP. The short motif at 223–226 (DEAH) is the DEAH box element. The Helicase C-terminal domain maps to 506-669 (DEETYIRKNK…ALEYTKSDRI (164 aa)). Positions 531–551 (ENRVEEEKKRQKEQAKLERTG) are enriched in basic and acidic residues. Disordered stretches follow at residues 531 to 569 (ENRV…NQKQ) and 799 to 843 (AKSQ…DSHT). A compositionally biased stretch (polar residues) spans 553-568 (RTGSSEEAQLSGMNQK).

Belongs to the DEAD box helicase family. DEAH subfamily. FANCM sub-subfamily. As to quaternary structure, interacts with the MHF histone-fold complex to form the FANCM-MHF complex.

The protein resides in the nucleus. It carries out the reaction ATP + H2O = ADP + phosphate + H(+). Functionally, ATP-dependent DNA helicase involved in DNA damage repair by homologous recombination and in genome maintenance. Capable of unwinding D-loops. Plays a role in limiting crossover recombinants during mitotic DNA double-strand break (DSB) repair. Component of a FANCM-MHF complex which promotes gene conversion at blocked replication forks, probably by reversal of the stalled fork. The protein is ATP-dependent DNA helicase MPH1 of Kluyveromyces lactis (strain ATCC 8585 / CBS 2359 / DSM 70799 / NBRC 1267 / NRRL Y-1140 / WM37) (Yeast).